We begin with the raw amino-acid sequence, 177 residues long: Large ribosomal subunit protein uL6 (177 aa).

This sequence belongs to the universal ribosomal protein uL6 family. Part of the 50S ribosomal subunit.

Functionally, this protein binds to the 23S rRNA, and is important in its secondary structure. It is located near the subunit interface in the base of the L7/L12 stalk, and near the tRNA binding site of the peptidyltransferase center. The sequence is that of Large ribosomal subunit protein uL6 from Chromobacterium violaceum (strain ATCC 12472 / DSM 30191 / JCM 1249 / CCUG 213 / NBRC 12614 / NCIMB 9131 / NCTC 9757 / MK).